We begin with the raw amino-acid sequence, 393 residues long: Cholinephosphotransferase 1 (393 aa).

Topologically, residues 1 to 40 (MGFFIPQSSLGNLKLYKYQSDDRSFLSNHVLRPFWRKFAT) are lumenal. A helical transmembrane segment spans residues 41 to 61 (IFPLWMAPNLVTLLGFCFIIF). Residues 62 to 172 (NVLTTLYYDP…YHTHKLYLAE (111 aa)) are Cytoplasmic-facing. A helical membrane pass occupies residues 173–193 (FCGPVEGIIVLCISFIAVGIY). Residues 194–210 (GPQTIWHTKVAQFSWQD) are Lumenal-facing. A helical membrane pass occupies residues 211 to 231 (FVFDVETVHLMYAFCTGALIF). The Cytoplasmic portion of the chain corresponds to 232 to 263 (NIVTAHTNVVRYYESQSTKSATPSKTAENISK). Residues 264-284 (AVNGLLPFFAYFSSIFTLVLI) traverse the membrane as a helical segment. Position 285 (Q285) is a topological domain, lumenal. Residues 286 to 306 (PSFISLALILSIGFSVAFVVG) form a helical membrane-spanning segment. The Cytoplasmic segment spans residues 307–320 (RMIIAHLTMQPFPM). A helical membrane pass occupies residues 321–341 (VNFPFLIPTIQLVLYAFMVYV). Over 342–348 (LDYQKGS) the chain is Lumenal. Residues 349 to 369 (IVSALVWMGLGLTLAIHGMFI) form a helical membrane-spanning segment. Residues 370 to 393 (NDIIYDITTFLDIYALSIKHPKEI) lie on the Cytoplasmic side of the membrane.

The protein belongs to the CDP-alcohol phosphatidyltransferase class-I family. Requires Mg(2+) as cofactor.

It localises to the microsome membrane. Its subcellular location is the endoplasmic reticulum membrane. It is found in the mitochondrion outer membrane. It carries out the reaction CDP-choline + a 1,2-diacyl-sn-glycerol = a 1,2-diacyl-sn-glycero-3-phosphocholine + CMP + H(+). The enzyme catalyses CDP-N,N-dimethylethanolamine + a 1,2-diacyl-sn-glycerol = a 1,2-diacyl-sn-glycero-3-phospho-N,N-dimethylethanolamine + CMP + H(+). It functions in the pathway phospholipid metabolism; phosphatidylcholine biosynthesis; phosphatidylcholine from phosphocholine: step 2/2. With respect to regulation, requires a divalent cation activator, and is inhibited by CMP. Activated by phospholipids, especially phosphatidylcholine. Its function is as follows. Catalyzes the final step in the CDP-choline route leading to phosphatidylcholin (PC). Preferentially uses CDP-monomethylethanolamine as aminoalcohol substrate. Shows highest activity toward di- and mono-unsaturated diacylglycerol species as lipid substrates. The CDP-choline pathway only contributes to net PC synthesis if exogenous choline is present. In its absence, this pathway recycles choline from PC turnover and may contribute to maintaining the proper PC species composition. The polypeptide is Cholinephosphotransferase 1 (CPT1) (Saccharomyces cerevisiae (strain ATCC 204508 / S288c) (Baker's yeast)).